We begin with the raw amino-acid sequence, 550 residues long: Glucose-6-phosphate isomerase (550 aa).

E356 acts as the Proton donor in catalysis. Residues H387 and K515 contribute to the active site.

The protein belongs to the GPI family.

It is found in the cytoplasm. The catalysed reaction is alpha-D-glucose 6-phosphate = beta-D-fructose 6-phosphate. It participates in carbohydrate biosynthesis; gluconeogenesis. It functions in the pathway carbohydrate degradation; glycolysis; D-glyceraldehyde 3-phosphate and glycerone phosphate from D-glucose: step 2/4. Catalyzes the reversible isomerization of glucose-6-phosphate to fructose-6-phosphate. The protein is Glucose-6-phosphate isomerase of Photobacterium profundum (strain SS9).